The following is a 362-amino-acid chain: Spermidine/putrescine import ATP-binding protein PotA (362 aa).

The ABC transporter domain maps to 4-235 (IKLDHITKQY…PVNDFVARFI (232 aa)). 37–44 (GPSGSGKT) contacts ATP.

It belongs to the ABC transporter superfamily. Spermidine/putrescine importer (TC 3.A.1.11.1) family. The complex is composed of two ATP-binding proteins (PotA), two transmembrane proteins (PotB and PotC) and a solute-binding protein (PotD).

The protein localises to the cell membrane. It catalyses the reaction ATP + H2O + polyamine-[polyamine-binding protein]Side 1 = ADP + phosphate + polyamineSide 2 + [polyamine-binding protein]Side 1.. Its function is as follows. Part of the ABC transporter complex PotABCD involved in spermidine/putrescine import. Responsible for energy coupling to the transport system. This Lactobacillus delbrueckii subsp. bulgaricus (strain ATCC 11842 / DSM 20081 / BCRC 10696 / JCM 1002 / NBRC 13953 / NCIMB 11778 / NCTC 12712 / WDCM 00102 / Lb 14) protein is Spermidine/putrescine import ATP-binding protein PotA.